The sequence spans 501 residues: Beta-secretase 1 (501 aa).

An N-terminal signal peptide occupies residues Met1–Gly21. Residues Thr22–Arg45 constitute a propeptide that is removed on maturation. Residues Thr22–Thr457 lie on the Extracellular side of the membrane. The Peptidase A1 domain maps to Tyr75–Ala416. Residue Asp93 is part of the active site. Lys126 bears the N6-acetyllysine mark. Asn153, Asn172, and Asn223 each carry an N-linked (GlcNAc...) asparagine glycan. Disulfide bonds link Cys216-Cys420, Cys278-Cys443, and Cys330-Cys380. 3 positions are modified to N6-acetyllysine: Lys275, Lys279, and Lys285. Asp289 is a catalytic residue. 3 positions are modified to N6-acetyllysine: Lys299, Lys300, and Lys307. N-linked (GlcNAc...) asparagine glycosylation occurs at Asn354. The helical transmembrane segment at Ile458–Cys478 threads the bilayer. Residues Cys474, Cys478, Cys482, and Cys485 are each lipidated (S-palmitoyl cysteine). The Cytoplasmic portion of the chain corresponds to Gln479 to Lys501. An interaction with RTN3 region spans residues Gln479 to Lys501. Positions Asp496–Leu500 match the DXXLL motif. At Ser498 the chain carries Phosphoserine. A Glycyl lysine isopeptide (Lys-Gly) (interchain with G-Cter in ubiquitin) cross-link involves residue Lys501.

This sequence belongs to the peptidase A1 family. As to quaternary structure, monomer. Interacts (via DXXLL motif) with GGA1, GGA2 and GGA3 (via their VHS domain); the interaction highly increases when BACE1 is phosphorylated at Ser-498. Interacts with RTN1; RTN2; RTN3 and RTN4; the interaction leads to inhibition of amyloid precursor protein processing. Interacts with SNX6. Interacts with PCSK9. Interacts with NAT8 and NAT8B. Interacts with BIN1. Interacts (via extracellular domain) with ADAM10 (via extracellular domain). Interacts with SORL1; this interaction may affect binding with APP and hence reduce APP cleavage. Interacts with NRDC AND NRG1. In terms of processing, palmitoylation mediates lipid raft localization. Acetylated in the endoplasmic reticulum at Lys-126, Lys-275, Lys-279, Lys-285, Lys-299, Lys-300 and Lys-307. Acetylation by NAT8 and NAT8B is transient and deacetylation probably occurs in the Golgi. Acetylation regulates the maturation, the transport to the plasma membrane, the stability and the expression of the protein. Post-translationally, ubiquitinated at Lys-501, ubiquitination leads to lysosomal degradation. Monoubiquitinated and 'Lys-63'-linked polyubitinated. Deubiquitnated by USP8; inhibits lysosomal degradation. In terms of processing, phosphorylation at Ser-498 is required for interaction with GGA1 and retrograded transport from endosomal compartments to the trans-Golgi network. Non-phosphorylated BACE1 enters a direct recycling route to the cell surface. N-Glycosylated. Addition of a bisecting N-acetylglucosamine by MGAT3 blocks lysosomal targeting, further degradation and is required for maintaining stability under stress conditions.

The protein localises to the cell membrane. It is found in the golgi apparatus. It localises to the trans-Golgi network. The protein resides in the endoplasmic reticulum. Its subcellular location is the endosome. The protein localises to the cell surface. It is found in the cytoplasmic vesicle membrane. It localises to the membrane raft. The protein resides in the lysosome. Its subcellular location is the late endosome. The protein localises to the early endosome. It is found in the recycling endosome. It localises to the cell projection. The protein resides in the axon. Its subcellular location is the dendrite. It carries out the reaction Broad endopeptidase specificity. Cleaves Glu-Val-Asn-Leu-|-Asp-Ala-Glu-Phe in the Swedish variant of Alzheimer's amyloid precursor protein.. Its activity is regulated as follows. Inhibited by RTN3 and RTN4. In terms of biological role, responsible for the proteolytic processing of the amyloid precursor protein (APP). Cleaves at the N-terminus of the A-beta peptide sequence, between residues 671 and 672 of APP, leads to the generation and extracellular release of beta-cleaved soluble APP, and a corresponding cell-associated C-terminal fragment which is later released by gamma-secretase. Cleaves CHL1. This Rattus norvegicus (Rat) protein is Beta-secretase 1 (Bace1).